Consider the following 203-residue polypeptide: UPF0637 protein EF_3078 (203 aa).

Belongs to the UPF0637 family.

This Enterococcus faecalis (strain ATCC 700802 / V583) protein is UPF0637 protein EF_3078.